The sequence spans 228 residues: Urease accessory protein UreF (228 aa).

It belongs to the UreF family. UreD, UreF and UreG form a complex that acts as a GTP-hydrolysis-dependent molecular chaperone, activating the urease apoprotein by helping to assemble the nickel containing metallocenter of UreC. The UreE protein probably delivers the nickel.

The protein localises to the cytoplasm. Functionally, required for maturation of urease via the functional incorporation of the urease nickel metallocenter. This is Urease accessory protein UreF from Lachnoclostridium phytofermentans (strain ATCC 700394 / DSM 18823 / ISDg) (Clostridium phytofermentans).